A 383-amino-acid chain; its full sequence is Putative glutamate--cysteine ligase 2-2 (383 aa).

Belongs to the glutamate--cysteine ligase type 2 family. YbdK subfamily.

The catalysed reaction is L-cysteine + L-glutamate + ATP = gamma-L-glutamyl-L-cysteine + ADP + phosphate + H(+). Functionally, ATP-dependent carboxylate-amine ligase which exhibits weak glutamate--cysteine ligase activity. The protein is Putative glutamate--cysteine ligase 2-2 of Paenarthrobacter aurescens (strain TC1).